The chain runs to 150 residues: SsrA-binding protein (150 aa).

Residues 127-150 (KRETEKQRDWQREKARIMKGDAKD) form a disordered region.

Belongs to the SmpB family.

The protein localises to the cytoplasm. Functionally, required for rescue of stalled ribosomes mediated by trans-translation. Binds to transfer-messenger RNA (tmRNA), required for stable association of tmRNA with ribosomes. tmRNA and SmpB together mimic tRNA shape, replacing the anticodon stem-loop with SmpB. tmRNA is encoded by the ssrA gene; the 2 termini fold to resemble tRNA(Ala) and it encodes a 'tag peptide', a short internal open reading frame. During trans-translation Ala-aminoacylated tmRNA acts like a tRNA, entering the A-site of stalled ribosomes, displacing the stalled mRNA. The ribosome then switches to translate the ORF on the tmRNA; the nascent peptide is terminated with the 'tag peptide' encoded by the tmRNA and targeted for degradation. The ribosome is freed to recommence translation, which seems to be the essential function of trans-translation. The protein is SsrA-binding protein of Cupriavidus necator (strain ATCC 17699 / DSM 428 / KCTC 22496 / NCIMB 10442 / H16 / Stanier 337) (Ralstonia eutropha).